The sequence spans 204 residues: Peroxynitrite isomerase (204 aa).

Positions 21–27 (GEWEGSG) match the GXWXGXG motif. Residue His-195 participates in heme b binding.

The protein belongs to the nitrobindin family. As to quaternary structure, homodimer. Heme b serves as cofactor.

It carries out the reaction peroxynitrite = nitrate. Its pathway is nitrogen metabolism. Heme-binding protein able to scavenge peroxynitrite and to protect free L-tyrosine against peroxynitrite-mediated nitration, by acting as a peroxynitrite isomerase that converts peroxynitrite to nitrate. Therefore, this protein likely plays a role in peroxynitrite sensing and in the detoxification of reactive nitrogen and oxygen species (RNS and ROS, respectively). Is able to bind nitric oxide (NO) in vitro, but may act as a sensor of peroxynitrite levels in vivo. This is Peroxynitrite isomerase from Arthrobacter sp. (strain FB24).